The primary structure comprises 251 residues: Hydroxyacylglutathione hydrolase (251 aa).

Residues H53, H55, D57, H58, H110, D127, and H165 each coordinate Zn(2+).

This sequence belongs to the metallo-beta-lactamase superfamily. Glyoxalase II family. Monomer. The cofactor is Zn(2+).

It carries out the reaction an S-(2-hydroxyacyl)glutathione + H2O = a 2-hydroxy carboxylate + glutathione + H(+). The protein operates within secondary metabolite metabolism; methylglyoxal degradation; (R)-lactate from methylglyoxal: step 2/2. Functionally, thiolesterase that catalyzes the hydrolysis of S-D-lactoyl-glutathione to form glutathione and D-lactic acid. The protein is Hydroxyacylglutathione hydrolase of Salmonella paratyphi A (strain ATCC 9150 / SARB42).